Consider the following 1140-residue polypeptide: Centrosomal protein of 135 kDa (1140 aa).

Residues 11–64 (NIRKRLDQLGYRQTLTVECLPLVEKLFSDLVHTTESLRQSKLSAVKAEKESANF) form a homodimerization region. 2 coiled-coil regions span residues 75–151 (NARL…KNLH) and 199–416 (LQVA…FAVT). Phosphoserine occurs at positions 383 and 439. Coiled-coil stretches lie at residues 447–644 (LKGI…LENK), 668–1036 (SLRI…LESL), and 1079–1113 (NTML…AIQE). Residue Ser-688 is modified to Phosphoserine. Residues 1114-1140 (MRRHGLATPPLSSTLRSPSHSPEHRNV) form a disordered region. Thr-1121 is subject to Phosphothreonine. Positions 1121–1133 (TPPLSSTLRSPSH) are enriched in low complexity. Residue Ser-1130 is modified to Phosphoserine.

It belongs to the CEP135/TSGA10 family. Homodimer. Interacts with DCTN2. Interacts with CEP250.

It is found in the cytoplasm. The protein localises to the cytoskeleton. The protein resides in the microtubule organizing center. Its subcellular location is the centrosome. It localises to the centriole. Its function is as follows. Centrosomal microtubule-binding protein involved in centriole biogenesis. Acts as a scaffolding protein during early centriole biogenesis. Required for the targeting of centriole satellite proteins to centrosomes such as of PCM1, SSX2IP and CEP290 and recruitment of WRAP73 to centrioles. Also required for centriole-centriole cohesion during interphase by acting as a platform protein for CEP250 at the centriole. Required for the recruitment of CEP295 to the proximal end of new-born centrioles at the centriolar microtubule wall during early S phase in a PLK4-dependent manner. This is Centrosomal protein of 135 kDa from Homo sapiens (Human).